Reading from the N-terminus, the 234-residue chain is MEAKSESTQASESWSSHPVYARYWQHYHQAMAWMRSHQSAYQKAVESVVTSPWYYPATDLAQSPAAKGGTSPKSRSKSPSASGDACRRRSRPGKPGPQRRSTEKPARFAEDNDSESDDCGIVCDLSNMVITDELRQYFAETEQHREELRRQHQLDAARLKDYVNADHGLYCDKRGRSTLPPTERPGERRQAEMKRLYGASAAKIQAMETAMQLSFDKHCDRKQPKYWPVIPLKF.

The segment at 60–116 (LAQSPAAKGGTSPKSRSKSPSASGDACRRRSRPGKPGPQRRSTEKPARFAEDNDSES) is disordered. Residues 67 to 83 (KGGTSPKSRSKSPSASG) are compositionally biased toward low complexity. Positions 100 to 110 (RSTEKPARFAE) are enriched in basic and acidic residues. Residues 130-153 (ITDELRQYFAETEQHREELRRQHQ) adopt a coiled-coil conformation.

As to quaternary structure, part of the core SMN complex that contains SMN1, GEMIN2/SIP1, DDX20/GEMIN3, GEMIN4, GEMIN5, GEMIN6, GEMIN7, GEMIN8 and STRAP/UNRIP. Part of the SMN-Sm complex that contains SMN1, GEMIN2/SIP1, DDX20/GEMIN3, GEMIN4, GEMIN5, GEMIN6, GEMIN7, GEMIN8, STRAP/UNRIP and the Sm proteins SNRPB, SNRPD1, SNRPD2, SNRPD3, SNRPE, SNRPF and SNRPG. Interacts with GEMIN6; the interaction is direct. Interacts with GEMIN7; the interaction is direct. Interacts with SMN1; the interaction is direct. Interacts with GEMIN4; the interaction is direct.

It localises to the nucleus. Its subcellular location is the gem. The protein resides in the cytoplasm. Functionally, the SMN complex catalyzes the assembly of small nuclear ribonucleoproteins (snRNPs), the building blocks of the spliceosome, and thereby plays an important role in the splicing of cellular pre-mRNAs. Most spliceosomal snRNPs contain a common set of Sm proteins SNRPB, SNRPD1, SNRPD2, SNRPD3, SNRPE, SNRPF and SNRPG that assemble in a heptameric protein ring on the Sm site of the small nuclear RNA to form the core snRNP (Sm core). In the cytosol, the Sm proteins SNRPD1, SNRPD2, SNRPE, SNRPF and SNRPG are trapped in an inactive 6S pICln-Sm complex by the chaperone CLNS1A that controls the assembly of the core snRNP. To assemble core snRNPs, the SMN complex accepts the trapped 5Sm proteins from CLNS1A forming an intermediate. Binding of snRNA inside 5Sm triggers eviction of the SMN complex, thereby allowing binding of SNRPD3 and SNRPB to complete assembly of the core snRNP. The protein is Gem-associated protein 8 (GEMIN8) of Bos taurus (Bovine).